We begin with the raw amino-acid sequence, 542 residues long: Leucine-rich repeat-containing protein 56 (542 aa).

LRR repeat units follow at residues 94 to 115, 117 to 138, 139 to 160, 161 to 182, and 186 to 206; these read NLDQ…GTSL, HLQV…ASLP, ALKE…CLLE, QLEV…RYLQ, and RLAM…PGPT. Residues 207 to 250 form the LRRCT domain; that stretch reads NKVPRGYNYRAEVRKLIPQLQVLDEVPAAHTGPPAPPRLSQDWL. Disordered stretches follow at residues 308–377, 396–475, and 507–542; these read LLSE…ADSS, LPYR…LQSR, and RLSP…PVPT. Positions 416–426 are enriched in basic and acidic residues; it reads RVPEEQVHQAE. Residues 522 to 532 show a composition bias toward low complexity; sequence PDAAARPPRAA.

Belongs to the LRRC56 family. In terms of assembly, interacts with IFT88.

The protein localises to the cell projection. Its subcellular location is the cilium. In terms of biological role, required for the assembly of dynein arms. This is Leucine-rich repeat-containing protein 56 (LRRC56) from Homo sapiens (Human).